Here is a 184-residue protein sequence, read N- to C-terminus: MVSMLLVGRIGKSVGLNGGLRLHLESDFPECLKKGVKVSVAPLNAFFCTSSFKGYTIHSYEHAKNLLFLETIHTPEKAKELTNLGLFMSEAESKKLCVLKDGEFFYCDLVGLSVVEENETLGKVVEIQRISQIDYFMVETARSLVEKGLAKIFLIPYRDFYIKEILLQDKKITTNNAKTLLENS.

Residues 101–180 form the PRC barrel domain; that stretch reads DGEFFYCDLV…KITTNNAKTL (80 aa).

This sequence belongs to the RimM family. In terms of assembly, binds ribosomal protein uS19.

The protein resides in the cytoplasm. In terms of biological role, an accessory protein needed during the final step in the assembly of 30S ribosomal subunit, possibly for assembly of the head region. Essential for efficient processing of 16S rRNA. May be needed both before and after RbfA during the maturation of 16S rRNA. It has affinity for free ribosomal 30S subunits but not for 70S ribosomes. The protein is Ribosome maturation factor RimM of Helicobacter pylori (strain Shi470).